A 124-amino-acid polypeptide reads, in one-letter code: Small ribosomal subunit protein uS13 (124 aa).

The segment at 98 to 124 (VRGQRTRCNARTRKGPRKTVGAKRKEK) is disordered.

It belongs to the universal ribosomal protein uS13 family. As to quaternary structure, part of the 30S ribosomal subunit. Forms a loose heterodimer with protein S19. Forms two bridges to the 50S subunit in the 70S ribosome.

Its function is as follows. Located at the top of the head of the 30S subunit, it contacts several helices of the 16S rRNA. In the 70S ribosome it contacts the 23S rRNA (bridge B1a) and protein L5 of the 50S subunit (bridge B1b), connecting the 2 subunits; these bridges are implicated in subunit movement. Contacts the tRNAs in the A and P-sites. The sequence is that of Small ribosomal subunit protein uS13 from Dictyoglomus thermophilum (strain ATCC 35947 / DSM 3960 / H-6-12).